The sequence spans 223 residues: Cytidylate kinase (223 aa).

Residue 10-18 (GPAGTGKSS) coordinates ATP.

Belongs to the cytidylate kinase family. Type 1 subfamily.

The protein resides in the cytoplasm. It carries out the reaction CMP + ATP = CDP + ADP. The enzyme catalyses dCMP + ATP = dCDP + ADP. This is Cytidylate kinase from Mycobacterium leprae (strain Br4923).